The following is a 468-amino-acid chain: Beta-amylase (468 aa).

Positions 1-36 are cleaved as a signal peptide; that stretch reads MTLYRSLWKKGCMLLLSLVLSLTAFIGSPSNTASAA. Residue aspartate 76 participates in substrate binding. Residues glutamate 83 and aspartate 87 each coordinate Ca(2+). 2 residues coordinate substrate: histidine 116 and aspartate 124. Cysteines 118 and 126 form a disulfide. Glutamate 170 provides a ligand contact to Ca(2+). The active-site Proton donor is glutamate 198. The substrate site is built by lysine 314, histidine 319, and threonine 357. The Proton acceptor role is filled by glutamate 394. Substrate contacts are provided by residues 395–396 and arginine 423; that span reads NA.

This sequence belongs to the glycosyl hydrolase 14 family. The cofactor is Ca(2+).

It carries out the reaction Hydrolysis of (1-&gt;4)-alpha-D-glucosidic linkages in polysaccharides so as to remove successive maltose units from the non-reducing ends of the chains.. The sequence is that of Beta-amylase from Cytobacillus firmus (Bacillus firmus).